Here is a 299-residue protein sequence, read N- to C-terminus: DNA-binding transcriptional repressor CapW (299 aa).

Positions 1–22 (MTDESKPTDDQPTSKGRQGARW) are disordered. The tract at residues 1–95 (MTDESKPTDD…SFKAVFPSSA (95 aa)) is winged HTH domain. The segment at 96–207 (VERYLDDLLR…LTRIKCCKYV (112 aa)) is WYL domain. Residues 131-211 (GRRLNADIVG…KCCKYVGQDR (81 aa)) enclose the WYL domain. Residues 156-200 (YQSLTDPEGGERMLSPHALVHDGNRWHVRAYCHKRKAFRDFSLTR) are probable ligand-binding region. Residues 208–299 (GQDRDRADED…RDEIKDLIQY (92 aa)) form a WCX domain region.

Homodimer.

Functionally, transcriptional regulator of a CBASS antivirus system. CBASS (cyclic oligonucleotide-based antiphage signaling system) provides immunity against bacteriophage. The CD-NTase protein synthesizes cyclic nucleotides in response to infection; these serve as specific second messenger signals. The signals activate a diverse range of effectors, leading to bacterial cell death and thus abortive phage infection. A type III CBASS system, part of a Cap17-CapW-CdnC-Cap7-Cap6-Cap18 locus. Binds specifically to palindromes that overlap the -10 site in the promoter of cdnC, found between the genes for divergently transcribed capW and cdnC (cognate DNA). Probably represses transcription bidirectionally from the promoter. This Pseudomonas aeruginosa protein is DNA-binding transcriptional repressor CapW.